Here is a 549-residue protein sequence, read N- to C-terminus: Dicarboxylate transporter 2.2, chloroplastic (549 aa).

Residues 1–54 constitute a chloroplast transit peptide; it reads MESLALRSISLSASYLSLHRSSSKSFALLPPSISVHTSPTLRSLSISSPRFTLR. The interval 57-79 is disordered; the sequence is ASSLPEEQNKPQPPPPSPPQPQG. Residues 67–77 are compositionally biased toward pro residues; the sequence is PQPPPPSPPQP. Transmembrane regions (helical) follow at residues 79-99, 115-135, 151-171, 220-240, 247-267, 294-314, 344-364, 365-385, 403-423, 436-456, 470-490, and 523-543; these read GAKL…RFLI, IFLF…AWAF, TAFA…FFFA, AGGV…SYPG, LGSF…AILL, WFKV…LIIY, NEWI…FGEA, IGIA…LLGV, WFAV…VAWM, LTWP…HYLF, FLAM…CLAF, and VGFV…SFWW.

It belongs to the SLC13A/DASS transporter (TC 2.A.47) family. DIT1 subfamily. Expressed in roots, rosette and cauline leaves, stems, flowers and siliques.

Its subcellular location is the plastid. It localises to the chloroplast inner membrane. In terms of biological role, may be involved in the transport of dicarboxylate compounds. In Arabidopsis thaliana (Mouse-ear cress), this protein is Dicarboxylate transporter 2.2, chloroplastic (DIT2-2).